Here is a 140-residue protein sequence, read N- to C-terminus: Putative ABC transporter permease protein ORF1 (140 aa).

The region spanning 1–133 (DPNVAFYSVV…ITTAGIFAYF (133 aa)) is the ABC transmembrane type-1 domain. Transmembrane regions (helical) follow at residues 9–29 (VVAV…IAAL), 65–85 (TACI…YVMT), and 115–135 (TIAS…YFVT).

Belongs to the binding-protein-dependent transport system permease family. MalFG subfamily.

Its subcellular location is the cell membrane. Its function is as follows. May play a role in sugar transport. This Caldicellulosiruptor sp. (strain Rt8B.4) protein is Putative ABC transporter permease protein ORF1.